A 134-amino-acid chain; its full sequence is Interferon-induced transmembrane protein 5 (134 aa).

Residues methionine 1 to alanine 20 are compositionally biased toward basic and acidic residues. The tract at residues methionine 1–proline 31 is disordered. The Extracellular segment spans residues methionine 1–methionine 39. The chain crosses the membrane as a helical span at residues leucine 40–valine 60. S-palmitoyl cysteine attachment occurs at residues cysteine 52, cysteine 53, and cysteine 86. At histidine 61–asparagine 88 the chain is on the cytoplasmic side. Residues isoleucine 89–glycine 109 traverse the membrane as a helical segment. The Extracellular portion of the chain corresponds to alanine 110 to asparagine 134.

It belongs to the CD225/Dispanin family. In terms of assembly, interacts with FKBP11. Palmitoylated. Detected in embryonic bone (at protein level). Highly expressed in osteoblasts of adults and embryos. Expressed in primitive hemopoietic cells.

The protein localises to the cell membrane. In terms of biological role, required for normal bone mineralization. In Mus musculus (Mouse), this protein is Interferon-induced transmembrane protein 5 (Ifitm5).